The following is a 633-amino-acid chain: MAKAVGIDLGTTNSVIAVWEGGEPSVVPNSEGNRTTPSVVAFTDTGERLVGQLARRQAILNPKGTIYSAKRFIGRHFDEISDEARAVTYDVVEGDGGAARFKVRDKLYAPEEISAQVLRKLADDASKQLGERVTEAVITVPAYFNDAQRTATKDAGRIAGLEVLRIINEPTAAALAYGMDKKEHETVLVFDLGGGTFDVSILDVGDGVVEVRSTAGDSHLGGDDFDRRLVDYLADDFQQENGIDLRKDPQALQRLFEAAEKAKTELSSVTQTQVSLPFITADASGPKHLTDTVMRSTFEQITSDLVERCLGPVQQAMADAKVGESDIDEVILVGGSTRIPAVQALVRRLTGGKDPNMSVNPDEVVALGAAIQAGVLKGEVKDVLLLDVTPLSLGVETRGGVMTKIIERNTTIPVRRSETFSTAEDNQPAVDVVVLQGERERAADNRVLGRFQLTDIRPAPRGEPQVEVTFDIDANGILNVTARDKDTGKEQGITISESSNLDRSEVERMVQEAERNQGQDQALREAVDARNELDAVAYQVEKRLAELGDAAPAHEKARAEMLVSDARAAVKEEAGVERVRPLTSELQQVLAGLAAHQGAATADGGPAQHAATGGPTSGGGGGDDVIDAEFDKG.

Residue threonine 196 is modified to Phosphothreonine; by autocatalysis. Positions 600 to 633 (ATADGGPAQHAATGGPTSGGGGGDDVIDAEFDKG) are disordered. The segment covering 624-633 (DVIDAEFDKG) has biased composition (acidic residues).

Belongs to the heat shock protein 70 family.

Acts as a chaperone. The protein is Chaperone protein dnaK2 (dnaK2) of Streptomyces avermitilis (strain ATCC 31267 / DSM 46492 / JCM 5070 / NBRC 14893 / NCIMB 12804 / NRRL 8165 / MA-4680).